Here is a 164-residue protein sequence, read N- to C-terminus: Large ribosomal subunit protein bL9 (164 aa).

This sequence belongs to the bacterial ribosomal protein bL9 family.

In terms of biological role, binds to the 23S rRNA. This Borrelia duttonii (strain Ly) protein is Large ribosomal subunit protein bL9.